Here is a 1167-residue protein sequence, read N- to C-terminus: Outer membrane protein SlpA (1167 aa).

The N-terminal stretch at 1–22 (MKKSLIALTTALSFGLAAAQTA) is a signal peptide. At 23-254 (APVSAPQVPA…RIAALERNAF (232 aa)) the chain is on the periplasmic side. Positions 29-92 (QVPALTDVPA…DQMRDGETPA (64 aa)) constitute an SLH domain. The beta stranded transmembrane segment at 255–268 (SVKPSLTIGYSVSR) threads the bilayer. Topologically, residues 269-377 (TSRNFDVDRL…RNGFGFNNLA (109 aa)) are extracellular. Cu(2+) contacts are provided by aspartate 274, aspartate 276, arginine 305, phenylalanine 308, aspartate 310, and glutamate 381. A beta stranded transmembrane segment spans residues 378 to 403 (RYKEGSTDIGISLGFDTSGQFSQVTS). The Periplasmic segment spans residues 404–416 (GTGGSLFSTAGRL). The chain crosses the membrane as a beta stranded span at residues 417–428 (QVNQIDLNFGLV). Residues 429 to 471 (TGLPSDAYVDTNGNGKKDDGEATGRGTYLGSGGTAAILRDPAG) are Extracellular-facing. Positions 438, 442, 444, 446, and 449 each coordinate Fe(3+). A beta stranded membrane pass occupies residues 472–490 (NVYRPVFFRFKNATTQFSV). Residues 491 to 494 (GNNP) are Periplasmic-facing. A beta stranded transmembrane segment spans residues 495–500 (VIVTLG). Residues 501–519 (QQQKFYFSDYVFDNNYDGR) are Extracellular-facing. The Cu(2+) site is built by aspartate 513 and asparagine 515. A beta stranded transmembrane segment spans residues 520–528 (GDGFTVTVD). At 529–540 (GSNVPVIGAWKP) the chain is on the periplasmic side. The beta stranded transmembrane segment at 541-549 (QIKGVYGSR) threads the bilayer. 4 residues coordinate Cu(2+): arginine 549, glycine 551, aspartate 553, and glycine 559. Residues 550–561 (SGLDGTAEAGYG) lie on the Extracellular side of the membrane. Residues 562–571 (VYYRGVRAQI) traverse the membrane as a beta stranded segment. Topologically, residues 572-577 (TPVGTL) are periplasmic. Residues 578 to 588 (TAGIHYAQEGR) form a beta stranded membrane-spanning segment. The Extracellular portion of the chain corresponds to 589–601 (DMFGAAQNTTSTP). A beta stranded transmembrane segment spans residues 602–615 (SDVTTYGADLHGKA). Over 616–617 (FG) the chain is Periplasmic. Residues 618–630 (VELHSEYATSRVR) form a beta stranded membrane-spanning segment. Serine 622 is a deinoxanthin binding site. At 631–638 (PNTANAAV) the chain is on the extracellular side. Residues 639–649 (QTSNAFYARVA) traverse the membrane as a beta stranded segment. At 650–670 (TRKDNLAFDLNTPAAKFGNDT) the chain is on the periplasmic side. Residues 671 to 682 (FGVSLYDLNYRK) traverse the membrane as a beta stranded segment. Topologically, residues 683-753 (IDAGYNNVAG…GTVVATNTKI (71 aa)) are extracellular. Position 716 (glycine 716) interacts with Cu(2+). Residues 754–766 (GQMGFGVKAAANL) traverse the membrane as a beta stranded segment. The Periplasmic segment spans residues 767–768 (GP). The chain crosses the membrane as a beta stranded span at residues 769-779 (VAIGGYYDTST). At 780 to 788 (GANGDNANR) the chain is on the extracellular side. Residues 789–798 (MTEAGGSAKV) form a beta stranded membrane-spanning segment. Topologically, residues 799 to 802 (AYSI) are periplasmic. Residues 803 to 814 (FSLRGTYNTLDS) form a beta stranded membrane-spanning segment. At 815–831 (NRPQIYRDAAGTQIIGD) the chain is on the extracellular side. Residues 832 to 843 (AKVRRYAVQADV) form a beta stranded membrane-spanning segment. Residues 844–848 (TPGLG) lie on the Periplasmic side of the membrane. Residues 849 to 860 (LFVGAYYRDVNV) form a beta stranded membrane-spanning segment. Topologically, residues 861–931 (NGVRSTTDRG…DQSRTATCFT (71 aa)) are extracellular. Residues 932-940 (SYGVEAGHA) form a beta stranded membrane-spanning segment. Residues 941–949 (GDNANALVK) are Periplasmic-facing. A beta stranded membrane pass occupies residues 950 to 960 (DLFFRVGYSRV). At 961-976 (YVPTTATATTGDFSGS) the chain is on the extracellular side. A beta stranded transmembrane segment spans residues 977-988 (VTYGDARYDRKV). Residues 989-990 (GV) lie on the Periplasmic side of the membrane. A beta stranded membrane pass occupies residues 991–1002 (ANVRLAGSFSTT). At 1003–1014 (NTQLDSRPAGTR) the chain is on the extracellular side. Residues 1015–1023 (GAVGLIVRT) form a beta stranded membrane-spanning segment. Residues 1024-1032 (DPLENVPFR) lie on the Periplasmic side of the membrane. Residues 1033–1046 (PQFNGQVGYYTADN) traverse the membrane as a beta stranded segment. Residues 1047-1052 (RVAAGN) are Extracellular-facing. A beta stranded membrane pass occupies residues 1053–1066 (YNANATKYGAGVVL). The Periplasmic portion of the chain corresponds to 1067 to 1073 (NDFLLPQ). A beta stranded membrane pass occupies residues 1074–1086 (TKIGVRYDGYMAQ). At 1087–1108 (NRQYTPFDGDGTQGYFSDANNN) the chain is on the extracellular side. Residues 1109-1122 (RRTNLNGVYVEGAY) form a beta stranded membrane-spanning segment. Topologically, residues 1123–1124 (QD) are periplasmic. Residues 1125-1138 (LIFSYGTYTLSQKD) traverse the membrane as a beta stranded segment. Topologically, residues 1139 to 1153 (LNGVEYGSGINNGQP) are extracellular. The beta stranded transmembrane segment at 1154-1166 (ARGQTFKISYKVN) threads the bilayer. Phenylalanine 1167 is a topological domain (periplasmic).

As to quaternary structure, homotrimer. Part of a heterooligomeric complex resulting in the main assembly named S-layer deinoxanthin-binding complex (SDBC) which is composed of six different subunits, namely SlpA, DR_2310, DR_0505, DR_A0283, DR_A0282, and DR_A0281.

It is found in the cell envelope. The protein resides in the cell outer membrane. It catalyses the reaction L-arginine(in) = L-arginine(out). The enzyme catalyses L-lysine(in) = L-lysine(out). It carries out the reaction L-glutamate(out) = L-glutamate(in). Its function is as follows. Plays an important role in the structural organization and integrity of the cell envelope, bridging the outer membrane to the peptidoglyan layer. Is a highly abundant molecule in the D.radiodurans cell envelope but is not a fundamental component of the S-layer. Binds the carotenoid deinoxanthin, a strong protective antioxidant specific of this bacterium, and could be part of the first lane of defense against UV radiation, especially under desiccation. Appears to be a nonselective channel. Is able to transport charged amino acids such as Lys, Arg and Glu; the large dimension of the pore points toward the physiological importance of the SDBC complex in assisting and allowing the exchange of substances, including nutrients, with the surrounding environment. This is Outer membrane protein SlpA from Deinococcus radiodurans (strain ATCC 13939 / DSM 20539 / JCM 16871 / CCUG 27074 / LMG 4051 / NBRC 15346 / NCIMB 9279 / VKM B-1422 / R1).